Consider the following 457-residue polypeptide: Ribosome biogenesis protein YTM1 (457 aa).

Positions 8–89 (VKVKFFTREK…ETTLTVEYTR (82 aa)) are ubiquitin-like (UBL) domain. Positions 99–457 (NFNNDDWVSA…INKGDNIFKN (359 aa)) are sufficient for interaction with ERB1 and association with 66S pre-ribosomes. 7 WD repeats span residues 101 to 140 (NNDDWVSALDVSDDFRHIYSGSYDGVVRTWNMSGKVEKQY), 142 to 180 (GHTGAVKAVKYISNTRIVSAGNDRSLRLWKTKNDDGSVS), 203 to 241 (GHKAPVVSLDVASNSRILSASYDNTVALWSTIYKEMTAI), 282 to 322 (SHTG…CIDT), 324 to 363 (TTSYPLLSIAQMPTLNLLACGSSVRHITLHDPRVSSSAKI), 370 to 410 (GHKN…PMYT), and 421 to 457 (GVNDKVFAVKWAKSIGIISGGQDKKIQINKGDNIFKN). The segment at 172 to 191 (TKNDDGSVSNNTGDENDEEN) is disordered.

This sequence belongs to the WD repeat WDR12/YTM1 family. As to quaternary structure, component of the NOP7 complex, composed of ERB1, NOP7 and YTM1. The complex is held together by ERB1, which interacts with NOP7 via its N-terminal domain and with YTM1 via a high-affinity interaction between the seven-bladed beta-propeller domains of the 2 proteins. The NOP7 complex associates with the 66S pre-ribosome. Interacts (via UBL domain) with MDN1 (via VWFA/MIDAS domain).

Its subcellular location is the nucleus. It is found in the nucleolus. The protein localises to the nucleoplasm. In terms of biological role, component of the NOP7 complex, which is required for maturation of the 25S and 5.8S ribosomal RNAs and formation of the 60S ribosome. The sequence is that of Ribosome biogenesis protein YTM1 from Candida glabrata (strain ATCC 2001 / BCRC 20586 / JCM 3761 / NBRC 0622 / NRRL Y-65 / CBS 138) (Yeast).